Consider the following 57-residue polypeptide: Weak toxin CM-1b (57 aa).

Intrachain disulfides connect Cys-3-Cys-19, Cys-12-Cys-37, Cys-40-Cys-49, and Cys-50-Cys-55.

It belongs to the three-finger toxin family. Short-chain subfamily. Orphan group XX sub-subfamily. Expressed by the venom gland.

Its subcellular location is the secreted. This Hemachatus haemachatus (Rinkhals) protein is Weak toxin CM-1b.